Here is a 456-residue protein sequence, read N- to C-terminus: Maturase-like protein 1 (456 aa).

To group II intron maturases.

The protein localises to the plastid. In terms of biological role, could be required for group III intron excision. This is Maturase-like protein 1 (mat1) from Euglena longa (Euglenophycean alga).